A 406-amino-acid polypeptide reads, in one-letter code: Kelch domain-containing protein 2 (406 aa).

Kelch repeat units follow at residues 31 to 85, 92 to 136, 148 to 207, 221 to 259, 271 to 311, and 322 to 359; these read ERSG…NTEG, SGSC…ERID, LGVW…TWSQ, HACA…NELI, HSLT…IQFN, and HTAC…IFSV.

Component of a CRL2(KLHDC2) E3 ubiquitin-protein ligase complex, also named ECS(KLHDC2) complex, composed of CUL2, Elongin BC (ELOB and ELOC), RBX1 and substrate-specific adapter KLHDC2. May form oligomers as a KLHDC2-ELOB-ELOC complex; this interaction is autoinhibitory for the E3 ligase complex as the substrate-binding site of KLHDC2 is blocked in the oligomer. Interacts with CREB3; interaction is direct and specific as it does not interact with CREB1, ATF4, ATF6, JUN, FOS, CEBPA or herpes simplex virus transactivator VP16. In terms of processing, autoubiquitinated by the CRL2(KLHDC2) E3 ligase complex. In terms of tissue distribution, widely expressed, with high levels in skeletal muscle, heart, pancreas and liver. Undetectable in peripheral blood leukocytes.

It is found in the nucleus. It participates in protein modification; protein ubiquitination. Functionally, substrate-recognition component of a Cul2-RING (CRL2) E3 ubiquitin-protein ligase complex of the DesCEND (destruction via C-end degrons) pathway, which recognizes a C-degron located at the extreme C terminus of target proteins, leading to their ubiquitination and degradation. The C-degron recognized by the DesCEND pathway is usually a motif of less than ten residues and can be present in full-length proteins, truncated proteins or proteolytically cleaved forms. The CRL2(KLHDC2) complex specifically recognizes proteins with a diglycine (Gly-Gly) at the C-terminus, leading to their ubiquitination and degradation. The CRL2(KLHDC2) complex mediates ubiquitination and degradation of truncated SELENOK and SELENOS selenoproteins produced by failed UGA/Sec decoding, which end with a diglycine. The CRL2(KLHDC2) complex also recognizes proteolytically cleaved proteins ending with Gly-Gly, such as the N-terminal fragment of USP1, leading to their degradation. May also act as an indirect repressor of CREB3-mediated transcription by interfering with CREB3-DNA-binding. The sequence is that of Kelch domain-containing protein 2 from Homo sapiens (Human).